Here is a 69-residue protein sequence, read N- to C-terminus: NAD(P)H-quinone oxidoreductase subunit L (69 aa).

2 helical membrane-spanning segments follow: residues 5-25 and 40-60; these read LILL…ITYF and GFMY…SPFL.

It belongs to the complex I NdhL subunit family. In terms of assembly, NDH-1 can be composed of about 15 different subunits; different subcomplexes with different compositions have been identified which probably have different functions.

The protein resides in the cellular thylakoid membrane. The enzyme catalyses a plastoquinone + NADH + (n+1) H(+)(in) = a plastoquinol + NAD(+) + n H(+)(out). It catalyses the reaction a plastoquinone + NADPH + (n+1) H(+)(in) = a plastoquinol + NADP(+) + n H(+)(out). Functionally, NDH-1 shuttles electrons from an unknown electron donor, via FMN and iron-sulfur (Fe-S) centers, to quinones in the respiratory and/or the photosynthetic chain. The immediate electron acceptor for the enzyme in this species is believed to be plastoquinone. Couples the redox reaction to proton translocation, and thus conserves the redox energy in a proton gradient. Cyanobacterial NDH-1 also plays a role in inorganic carbon-concentration. This Acaryochloris marina (strain MBIC 11017) protein is NAD(P)H-quinone oxidoreductase subunit L.